Reading from the N-terminus, the 354-residue chain is Rhodopsin (354 aa).

The Extracellular segment spans residues M1–A36. Residues N2 and N15 are each glycosylated (N-linked (GlcNAc...) asparagine). The helical transmembrane segment at Y37 to V61 threads the bilayer. At T62–N73 the chain is on the cytoplasmic side. A helical transmembrane segment spans residues Y74–Y96. At T97–C110 the chain is on the extracellular side. C110 and C187 form a disulfide bridge. The helical transmembrane segment at N111–I133 threads the bilayer. A 'Ionic lock' involved in activated form stabilization motif is present at residues E134–W136. Topologically, residues E134–H152 are cytoplasmic. Residues A153–V173 form a helical membrane-spanning segment. Over G174–S202 the chain is Extracellular. A helical transmembrane segment spans residues F203–G224. At R225 to R252 the chain is on the cytoplasmic side. The chain crosses the membrane as a helical span at residues M253–Y274. Over I275–L286 the chain is Extracellular. Residues F287–C308 form a helical membrane-spanning segment. An N6-(retinylidene)lysine modification is found at K296. Residues M309 to A354 lie on the Cytoplasmic side of the membrane. Residues C322 and C323 are each lipidated (S-palmitoyl cysteine). A disordered region spans residues E332–A354. Residues A334 to A354 show a composition bias toward low complexity.

This sequence belongs to the G-protein coupled receptor 1 family. Opsin subfamily. In terms of processing, phosphorylated on some or all of the serine and threonine residues present in the C-terminal region. Contains one covalently linked retinal chromophore.

It localises to the membrane. Its subcellular location is the cell projection. The protein localises to the cilium. The protein resides in the photoreceptor outer segment. Its function is as follows. Photoreceptor required for image-forming vision at low light intensity. While most salt water fish species use retinal as chromophore, most freshwater fish use 3-dehydroretinal, or a mixture of retinal and 3-dehydroretinal. Light-induced isomerization of 11-cis to all-trans retinal triggers a conformational change that activates signaling via G-proteins. Subsequent receptor phosphorylation mediates displacement of the bound G-protein alpha subunit by arrestin and terminates signaling. The sequence is that of Rhodopsin (rho) from Oryzias latipes (Japanese rice fish).